The sequence spans 822 residues: Pentatricopeptide repeat-containing protein At2g18940, chloroplastic (822 aa).

Positions 1 to 42 (MDGALFPHKPPYPIQSKRPPPSQSSNQSIKFSSATLHLPPPS) are disordered. Residues 1–77 (MDGALFPHKP…SAAARFPSLE (77 aa)) constitute a chloroplast transit peptide. Positions 8 to 22 (HKPPYPIQSKRPPPS) are enriched in pro residues. Over residues 23 to 37 (QSSNQSIKFSSATLH) the composition is skewed to low complexity. 17 PPR repeats span residues 209 to 243 (DVRA…GPSP), 244 to 279 (TLVT…GLKF), 280 to 314 (DEFT…GYEP), 315 to 349 (GTVT…SCPA), 350 to 384 (DSVT…GVMP), 385 to 419 (NAIT…GCVP), 420 to 454 (NTCT…GCSP), 455 to 489 (NRAT…GFEP), 490 to 524 (DRDT…GFNA), 525 to 559 (CVTT…GFKP), 560 to 594 (TETS…QIFP), 595 to 629 (SWML…GYKP), 630 to 664 (DMVI…GLSP), 665 to 699 (DLVT…QLKP), 700 to 734 (DLVS…GIRP), 735 to 769 (CIFT…DCRP), and 770 to 800 (NELT…IKTF).

It belongs to the PPR family. P subfamily.

The protein localises to the plastid. Its subcellular location is the chloroplast. In Arabidopsis thaliana (Mouse-ear cress), this protein is Pentatricopeptide repeat-containing protein At2g18940, chloroplastic.